The primary structure comprises 294 residues: MKTKIIVIVGPTAVGKTALAIEVAKRFNGEVVSGDSQQVYRGLDIGTAKASPEEQAAVPHHLIDVREITESYSAFDFVSEAKMTIEDIHSRGKLAIIAGGTGLYIQSLLEGYHLGGETPHEEILAYRASLEPYSDEELAHLVEQAGLEIPQFNRRRAMRALEIAHFGQDLENQEILYEPLIICLDDERSQLYERINHRVDLMFEAGLLDEAKWLFDHSPNVQAAKGIGYKELFPYFRGEQTFEEARESLKQATRRFAKRQLTWFRNRMQVTFYQIGESGVQDRILSQIEEFLDD.

10–17 (GPTAVGKT) contributes to the ATP binding site. 12–17 (TAVGKT) is a substrate binding site. The interval 35–38 (DSQQ) is interaction with substrate tRNA.

It belongs to the IPP transferase family. Monomer. Requires Mg(2+) as cofactor.

It catalyses the reaction adenosine(37) in tRNA + dimethylallyl diphosphate = N(6)-dimethylallyladenosine(37) in tRNA + diphosphate. Its function is as follows. Catalyzes the transfer of a dimethylallyl group onto the adenine at position 37 in tRNAs that read codons beginning with uridine, leading to the formation of N6-(dimethylallyl)adenosine (i(6)A). The sequence is that of tRNA dimethylallyltransferase from Streptococcus pneumoniae serotype 2 (strain D39 / NCTC 7466).